The primary structure comprises 170 residues: Crossover junction endodeoxyribonuclease RuvC (170 aa).

Residues Asp9, Glu70, and Asp145 contribute to the active site. Mg(2+) contacts are provided by Asp9, Glu70, and Asp145.

This sequence belongs to the RuvC family. In terms of assembly, homodimer which binds Holliday junction (HJ) DNA. The HJ becomes 2-fold symmetrical on binding to RuvC with unstacked arms; it has a different conformation from HJ DNA in complex with RuvA. In the full resolvosome a probable DNA-RuvA(4)-RuvB(12)-RuvC(2) complex forms which resolves the HJ. The cofactor is Mg(2+).

Its subcellular location is the cytoplasm. It catalyses the reaction Endonucleolytic cleavage at a junction such as a reciprocal single-stranded crossover between two homologous DNA duplexes (Holliday junction).. Its function is as follows. The RuvA-RuvB-RuvC complex processes Holliday junction (HJ) DNA during genetic recombination and DNA repair. Endonuclease that resolves HJ intermediates. Cleaves cruciform DNA by making single-stranded nicks across the HJ at symmetrical positions within the homologous arms, yielding a 5'-phosphate and a 3'-hydroxyl group; requires a central core of homology in the junction. The consensus cleavage sequence is 5'-(A/T)TT(C/G)-3'. Cleavage occurs on the 3'-side of the TT dinucleotide at the point of strand exchange. HJ branch migration catalyzed by RuvA-RuvB allows RuvC to scan DNA until it finds its consensus sequence, where it cleaves and resolves the cruciform DNA. In Chlamydia muridarum (strain MoPn / Nigg), this protein is Crossover junction endodeoxyribonuclease RuvC.